The following is a 421-amino-acid chain: Ankyrin repeat domain-containing protein 61 (421 aa).

ANK repeat units follow at residues 27 to 57 (TLHS…NQPL), 74 to 103 (QPIF…DPEV), 107 to 146 (QGFT…NAVL), 166 to 195 (NKHS…QVNA), 199 to 228 (SSMT…NVNC), 233 to 272 (TGNT…QVNA), 276 to 305 (EGQT…NVNI), and 309 to 342 (NGES…PLRL).

The chain is Ankyrin repeat domain-containing protein 61 (Ankrd61) from Mus musculus (Mouse).